The primary structure comprises 554 residues: Wee1-like protein kinase 2-C (554 aa).

Disordered regions lie at residues Met1 to Cys86 and Thr145 to Lys183. Composition is skewed to polar residues over residues Ser38–Cys48 and Val147–Gln163. Residues Phe213–Val487 enclose the Protein kinase domain. ATP contacts are provided by residues Ile219–Val227 and Lys242. The Proton acceptor role is filled by Asp340. Asn345 and Asp377 together coordinate Mg(2+). The stretch at Ala490–Leu516 forms a coiled coil.

Belongs to the protein kinase superfamily. Ser/Thr protein kinase family. WEE1 subfamily.

It is found in the nucleus. The catalysed reaction is L-tyrosyl-[protein] + ATP = O-phospho-L-tyrosyl-[protein] + ADP + H(+). Protein tyrosine kinase that phosphorylates and inhibits cdk1 and acts as a regulator of meiosis in oocytes. Required to ensure the meiotic cell cycle in oocytes by phosphorylating cdk1 at 'Tyr-15', leading to inhibit cdk1 activity and prevent meiosis. In Xenopus laevis (African clawed frog), this protein is Wee1-like protein kinase 2-C (wee2-c).